The following is a 253-amino-acid chain: Phosphate import ATP-binding protein PstB (253 aa).

The 244-residue stretch at 5-248 (IQVRDLNAYY…PSDKRTEDYI (244 aa)) folds into the ABC transporter domain. 37 to 44 (GPSGCGKS) lines the ATP pocket.

It belongs to the ABC transporter superfamily. Phosphate importer (TC 3.A.1.7) family. The complex is composed of two ATP-binding proteins (PstB), two transmembrane proteins (PstC and PstA) and a solute-binding protein (PstS).

It is found in the cell inner membrane. It catalyses the reaction phosphate(out) + ATP + H2O = ADP + 2 phosphate(in) + H(+). In terms of biological role, part of the ABC transporter complex PstSACB involved in phosphate import. Responsible for energy coupling to the transport system. In Koribacter versatilis (strain Ellin345), this protein is Phosphate import ATP-binding protein PstB.